Consider the following 362-residue polypeptide: Divinyl chlorophyll a/b light-harvesting protein PcbF (362 aa).

The next 6 helical transmembrane spans lie at 27–47 (FIGS…ANTL), 89–109 (IAFI…AGLL), 150–170 (FILG…VEWA), 211–231 (VMGG…FHIA), 251–271 (AVLS…AFWC), and 316–336 (LANV…WHAI).

Belongs to the PsbB/PsbC family. IsiA/Pcb subfamily. As to quaternary structure, the antenna complex consists of divinyl chlorophylls (a and b) and divinyl chlorophyll a/b binding proteins and binds more divinyl chlorophyll b than does the antenna complex from high-light-adapted Prochlorococcus. The cofactor is divinyl chlorophyll a. It depends on divinyl chlorophyll b as a cofactor.

It localises to the cellular thylakoid membrane. Its function is as follows. The antenna complex functions as a light receptor, it captures and delivers excitation energy to photosystems II and I. The Prochlorales pcb genes are not related to higher plant LHCs. This Prochlorococcus marinus (strain NATL2A) protein is Divinyl chlorophyll a/b light-harvesting protein PcbF (pcbF).